Consider the following 131-residue polypeptide: Amicyanin (131 aa).

The signal sequence occupies residues 1-26 (MISATKIRSCLAACVLAAFGATGALA). One can recognise a Plastocyanin-like domain in the interval 27-131 (DKATIPSESP…PFMRGKVVVE (105 aa)). Cu cation is bound by residues H79, C118, H121, and M124.

Requires Cu cation as cofactor.

The protein resides in the periplasm. It functions in the pathway one-carbon metabolism; methylamine degradation. Its function is as follows. Primary acceptor of electrons from methylamine dehydrogenase. Passes those electrons on either a soluble cytochrome c or to pseudoazurin. In Paracoccus denitrificans, this protein is Amicyanin (mauC).